Reading from the N-terminus, the 386-residue chain is Trichocyst matrix protein T2-A (386 aa).

An N-terminal signal peptide occupies residues Met-1–Ala-19. A propeptide spanning residues Asp-20–Gly-48 is cleaved from the precursor. Residues Leu-51–Lys-154 are a coiled coil. A propeptide spanning residues Lys-184 to Gln-238 is cleaved from the precursor. Residues Ser-293 to Asp-332 are a coiled coil.

The protein belongs to the TMP family.

The protein resides in the trichocyst. Its function is as follows. Structural protein that crystallize inside the trichocyst matrix. This chain is Trichocyst matrix protein T2-A (T2A), found in Paramecium tetraurelia.